Consider the following 396-residue polypeptide: Tryptophan synthase beta chain (396 aa).

Residue K86 is modified to N6-(pyridoxal phosphate)lysine.

Belongs to the TrpB family. Tetramer of two alpha and two beta chains. Pyridoxal 5'-phosphate serves as cofactor.

The catalysed reaction is (1S,2R)-1-C-(indol-3-yl)glycerol 3-phosphate + L-serine = D-glyceraldehyde 3-phosphate + L-tryptophan + H2O. The protein operates within amino-acid biosynthesis; L-tryptophan biosynthesis; L-tryptophan from chorismate: step 5/5. Functionally, the beta subunit is responsible for the synthesis of L-tryptophan from indole and L-serine. This Pectobacterium carotovorum subsp. carotovorum (strain PC1) protein is Tryptophan synthase beta chain.